Consider the following 602-residue polypeptide: Translation factor GUF1 homolog, organellar chromatophore (602 aa).

A tr-type G domain is found at 7 to 189 (SRIRNFCIIA…AIVERIPPPV (183 aa)). GTP is bound by residues 16–23 (AHIDHGKS), 82–86 (DTPGH), and 136–139 (NKID).

This sequence belongs to the TRAFAC class translation factor GTPase superfamily. Classic translation factor GTPase family. LepA subfamily.

It localises to the plastid. Its subcellular location is the organellar chromatophore. The catalysed reaction is GTP + H2O = GDP + phosphate + H(+). Functionally, promotes protein synthesis. May act as a fidelity factor of the translation reaction, by catalyzing a one-codon backward translocation of tRNAs on improperly translocated ribosomes. The chain is Translation factor GUF1 homolog, organellar chromatophore from Paulinella chromatophora.